We begin with the raw amino-acid sequence, 275 residues long: Hydroxyethylthiazole kinase (275 aa).

Residue Met50 coordinates substrate. ATP-binding residues include Arg126 and Ser171. Residue Ala200 coordinates substrate.

It belongs to the Thz kinase family. Requires Mg(2+) as cofactor.

It carries out the reaction 5-(2-hydroxyethyl)-4-methylthiazole + ATP = 4-methyl-5-(2-phosphooxyethyl)-thiazole + ADP + H(+). It functions in the pathway cofactor biosynthesis; thiamine diphosphate biosynthesis; 4-methyl-5-(2-phosphoethyl)-thiazole from 5-(2-hydroxyethyl)-4-methylthiazole: step 1/1. In terms of biological role, catalyzes the phosphorylation of the hydroxyl group of 4-methyl-5-beta-hydroxyethylthiazole (THZ). The protein is Hydroxyethylthiazole kinase of Acinetobacter baumannii (strain AB307-0294).